The following is a 311-amino-acid chain: MPLRIIFMGTPEFSVPTLAALVEAGHEIAAVYTQPPRPGGRRGLDLQKSPVHQAAELLGVPVLTPVNFKDAADRQAFRDFNADVAVVVAYGLLLPEEILSGTRYGCYNGHASLLPRWRGAAPIQRAIMAGDRETGMMVMKMDKGLDTGPVALTKTVPIGETMTAGELHDKLMHAGAALMKEAMVKLELGELPLTPQPQEGVLYAAKISKDETRIDFTKPAADVHNHIRGLAPFPGAWFELETAGRTERIKVLGSEPAAGAGAPGTILDDALTIACGDGAVRPTRLQRAGGKPLATPDFLRGSPIAAGTRIC.

Ser-112–Pro-115 is a binding site for (6S)-5,6,7,8-tetrahydrofolate.

This sequence belongs to the Fmt family.

The catalysed reaction is L-methionyl-tRNA(fMet) + (6R)-10-formyltetrahydrofolate = N-formyl-L-methionyl-tRNA(fMet) + (6S)-5,6,7,8-tetrahydrofolate + H(+). Functionally, attaches a formyl group to the free amino group of methionyl-tRNA(fMet). The formyl group appears to play a dual role in the initiator identity of N-formylmethionyl-tRNA by promoting its recognition by IF2 and preventing the misappropriation of this tRNA by the elongation apparatus. This is Methionyl-tRNA formyltransferase from Sinorhizobium fredii (strain NBRC 101917 / NGR234).